A 409-amino-acid chain; its full sequence is FBD-associated F-box protein At4g10400 (409 aa).

The F-box domain occupies 1–47; that stretch reads MDRISGLPDEVLVKILSFVPTKVAVSTSILSKRWEFLWMWLTKLKFG. One can recognise an FBD domain in the interval 330 to 379; sequence SWNQPSIVPECMLSSLQKFTWFKYLGRPQDRDIAVYILKNACRLRTATIK.

In Arabidopsis thaliana (Mouse-ear cress), this protein is FBD-associated F-box protein At4g10400.